The primary structure comprises 62 residues: Large ribosomal subunit protein bL28 (62 aa).

Belongs to the bacterial ribosomal protein bL28 family.

The polypeptide is Large ribosomal subunit protein bL28 (Helicobacter acinonychis (strain Sheeba)).